Consider the following 459-residue polypeptide: Alcohol acyl transferase 1 allele GSd (459 aa).

Residues His164 and Asn385 each act as proton acceptor in the active site.

The protein belongs to the plant acyltransferase family. As to expression, expressed at very low levels in the cortex and skin of ripe fruit.

Its function is as follows. Involved in the biosynthesis of volatile esters which confer ripe apple fruit flavor. Alcohol acyl transferase that can use a wide range of alcohols as substrate to produce esters. In Malus domestica (Apple), this protein is Alcohol acyl transferase 1 allele GSd.